The chain runs to 196 residues: Nucleoside triphosphate pyrophosphatase (196 aa).

Asp73 (proton acceptor) is an active-site residue.

The protein belongs to the Maf family. A divalent metal cation serves as cofactor.

Its subcellular location is the cytoplasm. It catalyses the reaction a ribonucleoside 5'-triphosphate + H2O = a ribonucleoside 5'-phosphate + diphosphate + H(+). The enzyme catalyses a 2'-deoxyribonucleoside 5'-triphosphate + H2O = a 2'-deoxyribonucleoside 5'-phosphate + diphosphate + H(+). Nucleoside triphosphate pyrophosphatase. May have a dual role in cell division arrest and in preventing the incorporation of modified nucleotides into cellular nucleic acids. In Maricaulis maris (strain MCS10) (Caulobacter maris), this protein is Nucleoside triphosphate pyrophosphatase.